The sequence spans 349 residues: Single-stranded TG1-3 DNA-binding protein (349 aa).

An RRM 1 domain is found at 45–127; it reads FRVFVGRLST…REIVVQKARP (83 aa). 2 disordered regions span residues 121–208 and 298–349; these read VVQK…PNSI and EDKQ…AITA. Phosphoserine is present on serine 152. The segment covering 168-179 has biased composition (polar residues); the sequence is ANTATAPSSNEA. The span at 181–191 shows a compositional bias: basic and acidic residues; the sequence is GVDKKQNEIKG. An RRM 2 domain is found at 206–296; sequence NSIYVSGLSV…LTLVVKSAVF (91 aa). Basic and acidic residues-rich tracts occupy residues 298–310 and 327–340; these read EDKQNDENEKNEN and TEPKASEVDSEEKS.

The protein resides in the cytoplasm. Its subcellular location is the nucleus. It is found in the chromosome. The protein localises to the telomere. In terms of biological role, binds single-stranded telomeric sequences of the type (TG[1-3])n in vitro. Has a role in meiosis. The polypeptide is Single-stranded TG1-3 DNA-binding protein (tcg1) (Schizosaccharomyces pombe (strain 972 / ATCC 24843) (Fission yeast)).